Reading from the N-terminus, the 1024-residue chain is Multidrug resistance protein MdtC (1024 aa).

A run of 12 helical transmembrane segments spans residues 12-32 (VATT…FSLL), 333-353 (EVER…FIFL), 360-380 (LIPA…MYLC), 387-407 (LSLM…IVVL), 435-455 (VLSM…MAGL), 469-489 (VAIG…CAWL), 528-548 (WVMV…ISIP), 853-873 (LWLI…LYES), 875-895 (VHPL…LLAL), 897-917 (LFDA…IGIV), 953-973 (PIIM…LSSG), and 984-1004 (ITIV…TPVI).

The protein belongs to the resistance-nodulation-cell division (RND) (TC 2.A.6) family. MdtC subfamily. Part of a tripartite efflux system composed of MdtA, MdtB and MdtC. MdtC forms a heteromultimer with MdtB.

It is found in the cell inner membrane. The sequence is that of Multidrug resistance protein MdtC from Yersinia pestis bv. Antiqua (strain Antiqua).